An 89-amino-acid polypeptide reads, in one-letter code: Small ribosomal subunit protein uS15 (89 aa).

Belongs to the universal ribosomal protein uS15 family. In terms of assembly, part of the 30S ribosomal subunit. Forms a bridge to the 50S subunit in the 70S ribosome, contacting the 23S rRNA.

One of the primary rRNA binding proteins, it binds directly to 16S rRNA where it helps nucleate assembly of the platform of the 30S subunit by binding and bridging several RNA helices of the 16S rRNA. Its function is as follows. Forms an intersubunit bridge (bridge B4) with the 23S rRNA of the 50S subunit in the ribosome. The polypeptide is Small ribosomal subunit protein uS15 (Arthrobacter sp. (strain FB24)).